The primary structure comprises 160 residues: Ribosomal RNA large subunit methyltransferase H (160 aa).

Leu76 and Gly108 together coordinate S-adenosyl-L-methionine.

Belongs to the RNA methyltransferase RlmH family. In terms of assembly, homodimer.

It is found in the cytoplasm. The catalysed reaction is pseudouridine(1915) in 23S rRNA + S-adenosyl-L-methionine = N(3)-methylpseudouridine(1915) in 23S rRNA + S-adenosyl-L-homocysteine + H(+). Its function is as follows. Specifically methylates the pseudouridine at position 1915 (m3Psi1915) in 23S rRNA. This chain is Ribosomal RNA large subunit methyltransferase H, found in Rhodopseudomonas palustris (strain ATCC BAA-98 / CGA009).